We begin with the raw amino-acid sequence, 187 residues long: Ribosome maturation factor RimM (187 aa).

In terms of domain architecture, PRC barrel spans 96–169 (EDEFFYADLE…KLVIDPTAAG (74 aa)).

The protein belongs to the RimM family. As to quaternary structure, binds ribosomal protein uS19.

It localises to the cytoplasm. An accessory protein needed during the final step in the assembly of 30S ribosomal subunit, possibly for assembly of the head region. Essential for efficient processing of 16S rRNA. May be needed both before and after RbfA during the maturation of 16S rRNA. It has affinity for free ribosomal 30S subunits but not for 70S ribosomes. The sequence is that of Ribosome maturation factor RimM from Rhizobium meliloti (strain 1021) (Ensifer meliloti).